We begin with the raw amino-acid sequence, 481 residues long: Phosphoenolpyruvate phosphatase (481 aa).

The N-terminal stretch at 1–36 is a signal peptide; the sequence is MPIYTSRSCFYLLLFHIILLCSVDKTLCRQTSSFVR. N-linked (GlcNAc...) asparagine glycosylation occurs at asparagine 109. Fe cation-binding residues include aspartate 168, aspartate 195, and tyrosine 198. Aspartate 195 contributes to the Zn(2+) binding site. Asparagine 206 is a glycosylation site (N-linked (GlcNAc...) asparagine). Zn(2+) is bound by residues asparagine 232 and histidine 317. Position 232 (asparagine 232) interacts with substrate. The active-site Proton donor is histidine 327. Histidine 354 is a binding site for Zn(2+). A substrate-binding site is contributed by 354–356; that stretch reads HVH. Histidine 356 provides a ligand contact to Fe cation. N-linked (GlcNAc...) asparagine glycosylation is found at asparagine 370 and asparagine 427.

The protein belongs to the metallophosphoesterase superfamily. Purple acid phosphatase family.

Its subcellular location is the vacuole lumen. It catalyses the reaction phosphoenolpyruvate + H2O = pyruvate + phosphate. Functionally, phosphoenolpyruvate phosphatase that probably operates in the vacuole to release phosphate from phosphoenolpyruvate (PEP) under phosphorus starvation. The polypeptide is Phosphoenolpyruvate phosphatase (ACPEPP) (Allium cepa (Onion)).